A 311-amino-acid chain; its full sequence is Olfactory receptor 8B8 (311 aa).

Over 1 to 25 the chain is Extracellular; the sequence is MAAENSSFVTQFILAGLTDQPGVQI. N-linked (GlcNAc...) asparagine glycosylation occurs at Asn-5. A helical membrane pass occupies residues 26 to 46; that stretch reads PLFFLFLGFYVVTVVGNLGLI. The Cytoplasmic portion of the chain corresponds to 47 to 54; the sequence is TLIRLNSH. The helical transmembrane segment at 55-75 threads the bilayer; it reads LHTPMYFFLYNLSFIDFCYSS. Residues 76–99 are Extracellular-facing; it reads VITPKMLMSFVLKKNSISYAGCMT. Cys-97 and Cys-189 form a disulfide bridge. Residues 100–120 traverse the membrane as a helical segment; sequence QLFFFLFFVVSESFILSAMAY. The Cytoplasmic segment spans residues 121 to 139; the sequence is DRYVAICNPLLYMVTMSPQ. The chain crosses the membrane as a helical span at residues 140–160; sequence VCFLLLLGVYGMGFAGAMAHT. The Extracellular portion of the chain corresponds to 161–197; sequence ACMMGVTFCANNLVNHYMCDILPLLECACTSTYVNEL. A helical transmembrane segment spans residues 198 to 217; it reads VVFVVVGIDIGVPTVTIFIS. Residues 218-237 are Cytoplasmic-facing; it reads YALILSSIFHIDSTEGRSKA. A helical membrane pass occupies residues 238-258; sequence FSTCSSHIIAVSLFFGSGAFM. The Extracellular segment spans residues 259–271; that stretch reads YLKPFSLLAMNQG. The chain crosses the membrane as a helical span at residues 272–292; that stretch reads KVSSLFYTTVVPMLNPLIYSL. The Cytoplasmic portion of the chain corresponds to 293-311; that stretch reads RNKDVKVALKKILNKNAFS.

This sequence belongs to the G-protein coupled receptor 1 family. Expressed in the tongue and testis.

It is found in the cell membrane. In terms of biological role, odorant receptor (Potential). May be involved in taste perception. This is Olfactory receptor 8B8 from Homo sapiens (Human).